A 233-amino-acid polypeptide reads, in one-letter code: 2-C-methyl-D-erythritol 4-phosphate cytidylyltransferase (233 aa).

It belongs to the IspD/TarI cytidylyltransferase family. IspD subfamily.

The catalysed reaction is 2-C-methyl-D-erythritol 4-phosphate + CTP + H(+) = 4-CDP-2-C-methyl-D-erythritol + diphosphate. The protein operates within isoprenoid biosynthesis; isopentenyl diphosphate biosynthesis via DXP pathway; isopentenyl diphosphate from 1-deoxy-D-xylulose 5-phosphate: step 2/6. Catalyzes the formation of 4-diphosphocytidyl-2-C-methyl-D-erythritol from CTP and 2-C-methyl-D-erythritol 4-phosphate (MEP). The protein is 2-C-methyl-D-erythritol 4-phosphate cytidylyltransferase of Thiobacillus denitrificans (strain ATCC 25259 / T1).